A 243-amino-acid polypeptide reads, in one-letter code: 3-deoxy-manno-octulosonate cytidylyltransferase (243 aa).

It belongs to the KdsB family.

The protein resides in the cytoplasm. It carries out the reaction 3-deoxy-alpha-D-manno-oct-2-ulosonate + CTP = CMP-3-deoxy-beta-D-manno-octulosonate + diphosphate. Its pathway is nucleotide-sugar biosynthesis; CMP-3-deoxy-D-manno-octulosonate biosynthesis; CMP-3-deoxy-D-manno-octulosonate from 3-deoxy-D-manno-octulosonate and CTP: step 1/1. In terms of biological role, activates KDO (a required 8-carbon sugar) for incorporation into bacterial lipopolysaccharide in Gram-negative bacteria. The sequence is that of 3-deoxy-manno-octulosonate cytidylyltransferase from Wigglesworthia glossinidia brevipalpis.